The primary structure comprises 562 residues: Formate--tetrahydrofolate ligase (562 aa).

71–78 (TPAGEGKS) lines the ATP pocket.

It belongs to the formate--tetrahydrofolate ligase family.

The catalysed reaction is (6S)-5,6,7,8-tetrahydrofolate + formate + ATP = (6R)-10-formyltetrahydrofolate + ADP + phosphate. The protein operates within one-carbon metabolism; tetrahydrofolate interconversion. The chain is Formate--tetrahydrofolate ligase from Bacillus thuringiensis (strain Al Hakam).